We begin with the raw amino-acid sequence, 265 residues long: Cytochrome c oxidase subunit 3 (265 aa).

Helical transmembrane passes span 16 to 36 (PWPI…VMYM), 41 to 61 (GGAT…FVWW), 84 to 104 (YGSI…FWAS), 137 to 157 (TPIL…ILAG), 162 to 182 (AVYA…FQGM), 200 to 220 (FYLA…FSII), and 245 to 265 (WHFV…WGGI).

It belongs to the cytochrome c oxidase subunit 3 family. In terms of assembly, component of the cytochrome c oxidase (complex IV, CIV), a multisubunit enzyme composed of a catalytic core of 3 subunits and several supernumerary subunits. The complex exists as a monomer or a dimer and forms supercomplexes (SCs) in the inner mitochondrial membrane with ubiquinol-cytochrome c oxidoreductase (cytochrome b-c1 complex, complex III, CIII).

It localises to the mitochondrion inner membrane. The enzyme catalyses 4 Fe(II)-[cytochrome c] + O2 + 8 H(+)(in) = 4 Fe(III)-[cytochrome c] + 2 H2O + 4 H(+)(out). Functionally, component of the cytochrome c oxidase, the last enzyme in the mitochondrial electron transport chain which drives oxidative phosphorylation. The respiratory chain contains 3 multisubunit complexes succinate dehydrogenase (complex II, CII), ubiquinol-cytochrome c oxidoreductase (cytochrome b-c1 complex, complex III, CIII) and cytochrome c oxidase (complex IV, CIV), that cooperate to transfer electrons derived from NADH and succinate to molecular oxygen, creating an electrochemical gradient over the inner membrane that drives transmembrane transport and the ATP synthase. Cytochrome c oxidase is the component of the respiratory chain that catalyzes the reduction of oxygen to water. Electrons originating from reduced cytochrome c in the intermembrane space (IMS) are transferred via the dinuclear copper A center (CU(A)) of subunit 2 and heme A of subunit 1 to the active site in subunit 1, a binuclear center (BNC) formed by heme A3 and copper B (CU(B)). The BNC reduces molecular oxygen to 2 water molecules using 4 electrons from cytochrome c in the IMS and 4 protons from the mitochondrial matrix. The chain is Cytochrome c oxidase subunit 3 (COX3) from Oenothera berteroana (Bertero's evening primrose).